The chain runs to 291 residues: ATP synthase gamma chain (291 aa).

Belongs to the ATPase gamma chain family. F-type ATPases have 2 components, CF(1) - the catalytic core - and CF(0) - the membrane proton channel. CF(1) has five subunits: alpha(3), beta(3), gamma(1), delta(1), epsilon(1). CF(0) has three main subunits: a, b and c.

The protein localises to the cell inner membrane. Produces ATP from ADP in the presence of a proton gradient across the membrane. The gamma chain is believed to be important in regulating ATPase activity and the flow of protons through the CF(0) complex. The protein is ATP synthase gamma chain of Syntrophus aciditrophicus (strain SB).